The chain runs to 227 residues: MGDAGSERSKAPSLPPRCPCGFWGSSKTMNLCSKCFADFQKKQPDDDSAPSTSNSQSDLFSEETTSDNNNTSITTPTLSPSQQPLPTELNVTSPSKEECGPCTDTAHVSLITPTKRSCGTDSQSENEASPVKRPRLLENTERSEETSRSKQKSRRRCFQCQTKLELVQQELGSCRCGYVFCMLHRLPEQHDCTFDHMGRGREEAIMKMVKLDRKVGRSCQRIGEGCS.

The A20-type zinc finger occupies 12–44 (PSLPPRCPCGFWGSSKTMNLCSKCFADFQKKQP). 4 residues coordinate Zn(2+): Cys18, Cys20, Cys32, and Cys35. 2 disordered regions span residues 41–100 (KKQP…EECG) and 113–148 (PTKRSCGTDSQSENEASPVKRPRLLENTERSEETSR). A compositionally biased stretch (polar residues) spans 49 to 59 (APSTSNSQSDL). Residues 66–77 (SDNNNTSITTPT) are compositionally biased toward low complexity. 2 stretches are compositionally biased toward polar residues: residues 78-94 (LSPSQQPLPTELNVTSP) and 113-127 (PTKRSCGTDSQSENE). Residues 135–148 (RLLENTERSEETSR) are compositionally biased toward basic and acidic residues. Residues 151-200 (QKSRRRCFQCQTKLELVQQELGSCRCGYVFCMLHRLPEQHDCTFDHMGRG) form an AN1-type zinc finger. 8 residues coordinate Zn(2+): Cys157, Cys160, Cys174, Cys176, Cys181, His184, His190, and Cys192.

The protein is AN1-type zinc finger protein 3 (ZFAND3) of Homo sapiens (Human).